We begin with the raw amino-acid sequence, 75 residues long: Putative sulfur carrier protein MJ0990 (75 aa).

The Cysteine persulfide intermediate role is filled by C15.

Belongs to the sulfur carrier protein TusA family.

This Methanocaldococcus jannaschii (strain ATCC 43067 / DSM 2661 / JAL-1 / JCM 10045 / NBRC 100440) (Methanococcus jannaschii) protein is Putative sulfur carrier protein MJ0990.